A 154-amino-acid chain; its full sequence is Ribosome maturation factor RimP (154 aa).

Belongs to the RimP family.

The protein localises to the cytoplasm. Functionally, required for maturation of 30S ribosomal subunits. The sequence is that of Ribosome maturation factor RimP from Ruthia magnifica subsp. Calyptogena magnifica.